Consider the following 82-residue polypeptide: Putative membrane protein insertion efficiency factor (82 aa).

This sequence belongs to the UPF0161 family.

The protein resides in the cell inner membrane. In terms of biological role, could be involved in insertion of integral membrane proteins into the membrane. The chain is Putative membrane protein insertion efficiency factor from Rickettsia africae (strain ESF-5).